The primary structure comprises 756 residues: MAKRTFSTLEAFLIFLLVIMTVITVALLTLLFVTSGTIENHKDSGNHWFSTTLGSTTTQPPPITQTPNFPSFRNFSGYYIGVGRADCTGQVSDINLMGYGKNGQNARGLLTRLFSRAFILADPDGSNRMAFVSVELCMISQRLRLEVLKRLESKYGSLYRRDNVILSAIHTHSGPAGFFQYTLYILASEGFSNRTFQYIVSGIMKSIDIAHTNLKPGKIFINKGNVANVQINRSPSSYLLNPQSERARYSSNTDKEMLVLKLVDLNGEDLGLISWFAIHPVSMNNSNHFVNSDNMGYAAYLFEQEKNKGYLPGQGPFVAGFASSNLGDVSPNILGPHCVNTGESCDNDKSTCPNGGPSMCMASGPGQDMFESTHIIGRIIYQKAKELYASASQEVTGPVLAAHQWVNMTDVSVQLNATHTVKTCKPALGYSFAAGTIDGVSGLNITQGTTEGDPFWDTLRDQLLGKPSEEIVECQKPKPILLHSGELTIPHPWQPDIVDVQIVTVGSLAIAAIPGELTTMSGRRFREAIKKEFALYGMKDMTVVIAGLSNVYTHYITTYEEYQAQRYEAASTIYGPHTLSAYIQLFRDLAKAIATDTVANMSSGPEPPFFKNLIASLIPNIADRAPIGKHFGDVLQPAKPEYRVGEVVEVIFVGANPKNSAENQTHQTFLTVEKYEDSVADWQIMYNDASWETRFYWHKGILGLSNATIYWHIPDTAYPGIYRIRYFGHNRKQELLKPAVILAFEGISSPFEVVTT.

At 1–11 the chain is on the cytoplasmic side; it reads MAKRTFSTLEA. A helical; Signal-anchor for type II membrane protein membrane pass occupies residues 12–32; the sequence is FLIFLLVIMTVITVALLTLLF. At 33–756 the chain is on the lumenal side; it reads VTSGTIENHK…ISSPFEVVTT (724 aa). Thr56, Thr57, Thr58, and Thr64 each carry an O-linked (GalNAc...) threonine glycan. Residue Leu110 participates in Ca(2+) binding. His170 contacts Zn(2+). N-linked (GlcNAc...) asparagine glycosylation occurs at Asn193. His279 contacts Zn(2+). Ser330 acts as the Nucleophile in catalysis. 2 disulfides stabilise this stretch: Cys338/Cys352 and Cys345/Cys360. 2 N-linked (GlcNAc...) asparagine glycosylation sites follow: Asn407 and Asn444. Residues Cys424 and Cys474 are joined by a disulfide bond. Glu516 and Tyr555 together coordinate Zn(2+). Positions 688, 690, and 693 each coordinate Ca(2+). The tract at residues 746–756 is required for correct folding and localization; it reads GISSPFEVVTT.

Belongs to the neutral ceramidase family. In terms of assembly, may interact with CAV1. Zn(2+) serves as cofactor. Post-translationally, proteolytic cleavage of the N-terminus removes the signal-anchor and produces a soluble form of the protein. In terms of processing, N-glycosylated. Required for enzyme activity. O-glycosylated. Required to retain it as a type II membrane protein at the cell surface. Post-translationally, phosphorylated. May prevent ubiquitination and subsequent degradation. In terms of processing, ubiquitinated, leading to its degradation by the proteasome. Ubiquitination is triggered by nitric oxide. Widely expressed. Strongly expressed in small intestine and to a lower extent in liver and kidney. Highly expressed in duodenum, jejunum and ileum along the brush border of the small intestine (at protein level).

The protein resides in the cell membrane. It localises to the membrane raft. The protein localises to the membrane. Its subcellular location is the caveola. It is found in the golgi apparatus membrane. The protein resides in the mitochondrion. It localises to the secreted. The protein localises to the extracellular exosome. It carries out the reaction an N-acylsphing-4-enine + H2O = sphing-4-enine + a fatty acid. The catalysed reaction is N-hexadecanoylsphing-4-enine + H2O = sphing-4-enine + hexadecanoate. It catalyses the reaction N-dodecanoylsphing-4-enine + H2O = dodecanoate + sphing-4-enine. The enzyme catalyses N-octadecanoylsphing-4-enine + H2O = sphing-4-enine + octadecanoate. It carries out the reaction N-octanoylsphing-4-enine + H2O = octanoate + sphing-4-enine. The catalysed reaction is N-(hexanoyl)sphing-4-enine + H2O = hexanoate + sphing-4-enine. It catalyses the reaction N-tetradecanoylsphing-4-enine + H2O = tetradecanoate + sphing-4-enine. The enzyme catalyses N-(9Z-octadecenoyl)-sphing-4-enine + H2O = sphing-4-enine + (9Z)-octadecenoate. It carries out the reaction N-(15Z-tetracosenoyl)-sphing-4-enine + H2O = (15Z)-tetracosenoate + sphing-4-enine. The catalysed reaction is sphinganine + hexadecanoate = N-hexadecanoylsphinganine + H2O. It catalyses the reaction N-(octadecanoyl)-sphinganine + H2O = sphinganine + octadecanoate. Its pathway is lipid metabolism; sphingolipid metabolism. Inhibited by D-erythro-MAPP. Functionally, plasma membrane ceramidase that hydrolyzes sphingolipid ceramides into sphingosine and free fatty acids at neutral pH. Ceramides, sphingosine, and its phosphorylated form sphingosine-1-phosphate are bioactive lipids that mediate cellular signaling pathways regulating several biological processes including cell proliferation, apoptosis and differentiation. Also catalyzes the reverse reaction allowing the synthesis of ceramides from fatty acids and sphingosine. Together with sphingomyelinase, participates in the production of sphingosine and sphingosine-1-phosphate from the degradation of sphingomyelin, a sphingolipid enriched in the plasma membrane of cells. Also participates in the hydrolysis of ceramides from the extracellular milieu allowing the production of sphingosine-1-phosphate inside and outside cells. This is the case for instance with the digestion of dietary sphingolipids in the intestinal tract. In Mus musculus (Mouse), this protein is Neutral ceramidase (Asah2).